Consider the following 159-residue polypeptide: Small ribosomal subunit protein uS7m (159 aa).

Belongs to the universal ribosomal protein uS7 family. In terms of assembly, part of the small ribosomal subunit.

The protein resides in the mitochondrion. Its function is as follows. One of the primary rRNA binding proteins, it binds directly to the small rRNA where it nucleates assembly of the head domain of the small subunit. The chain is Small ribosomal subunit protein uS7m (RPS7) from Reclinomonas americana.